The chain runs to 241 residues: Carboxy-S-adenosyl-L-methionine synthase (241 aa).

S-adenosyl-L-methionine-binding positions include Y38, G63–S65, D88–N89, D116–I117, N131, and R198.

It belongs to the class I-like SAM-binding methyltransferase superfamily. Cx-SAM synthase family. In terms of assembly, homodimer.

It catalyses the reaction prephenate + S-adenosyl-L-methionine = carboxy-S-adenosyl-L-methionine + 3-phenylpyruvate + H2O. In terms of biological role, catalyzes the conversion of S-adenosyl-L-methionine (SAM) to carboxy-S-adenosyl-L-methionine (Cx-SAM). This is Carboxy-S-adenosyl-L-methionine synthase from Pasteurella multocida (strain Pm70).